The following is a 359-amino-acid chain: Aromatic amino acid aminotransferase (359 aa).

Residues 1 to 42 (MSERKPPYLRSALDSIPPYRPGRKVVGPDGRSAKLSSNESPF) are disordered. The residue at position 223 (Lys223) is an N6-(pyridoxal phosphate)lysine.

The protein belongs to the class-II pyridoxal-phosphate-dependent aminotransferase family. As to quaternary structure, homodimer. Pyridoxal 5'-phosphate serves as cofactor.

It catalyses the reaction an aromatic L-alpha-amino acid + 2-oxoglutarate = an aromatic oxo-acid + L-glutamate. Functionally, aminotransferase that catalyzes the conversion of aromatic amino acids and 2-oxoglutarate into corresponding aromatic oxo acids and L-glutamate. In Thermobifida fusca (strain YX), this protein is Aromatic amino acid aminotransferase.